Reading from the N-terminus, the 234-residue chain is Leucyl/phenylalanyl-tRNA--protein transferase (234 aa).

This sequence belongs to the L/F-transferase family.

Its subcellular location is the cytoplasm. It carries out the reaction N-terminal L-lysyl-[protein] + L-leucyl-tRNA(Leu) = N-terminal L-leucyl-L-lysyl-[protein] + tRNA(Leu) + H(+). The catalysed reaction is N-terminal L-arginyl-[protein] + L-leucyl-tRNA(Leu) = N-terminal L-leucyl-L-arginyl-[protein] + tRNA(Leu) + H(+). It catalyses the reaction L-phenylalanyl-tRNA(Phe) + an N-terminal L-alpha-aminoacyl-[protein] = an N-terminal L-phenylalanyl-L-alpha-aminoacyl-[protein] + tRNA(Phe). Functions in the N-end rule pathway of protein degradation where it conjugates Leu, Phe and, less efficiently, Met from aminoacyl-tRNAs to the N-termini of proteins containing an N-terminal arginine or lysine. This Syntrophobacter fumaroxidans (strain DSM 10017 / MPOB) protein is Leucyl/phenylalanyl-tRNA--protein transferase.